The following is a 340-amino-acid chain: N-acetyl-gamma-glutamyl-phosphate reductase (340 aa).

Residue Cys-146 is part of the active site.

The protein belongs to the NAGSA dehydrogenase family. Type 1 subfamily.

The protein localises to the cytoplasm. It catalyses the reaction N-acetyl-L-glutamate 5-semialdehyde + phosphate + NADP(+) = N-acetyl-L-glutamyl 5-phosphate + NADPH + H(+). The protein operates within amino-acid biosynthesis; L-arginine biosynthesis; N(2)-acetyl-L-ornithine from L-glutamate: step 3/4. In terms of biological role, catalyzes the NADPH-dependent reduction of N-acetyl-5-glutamyl phosphate to yield N-acetyl-L-glutamate 5-semialdehyde. In Streptococcus sanguinis (strain SK36), this protein is N-acetyl-gamma-glutamyl-phosphate reductase.